Here is a 198-residue protein sequence, read N- to C-terminus: Recombination protein RecR (198 aa).

The segment at 57–72 (CSVCGHITDRDPCYIC) adopts a C4-type zinc-finger fold. Positions 80–175 (SVVCVVQEPK…KVTRIAHGLP (96 aa)) constitute a Toprim domain.

The protein belongs to the RecR family.

May play a role in DNA repair. It seems to be involved in an RecBC-independent recombinational process of DNA repair. It may act with RecF and RecO. In Bacillus cytotoxicus (strain DSM 22905 / CIP 110041 / 391-98 / NVH 391-98), this protein is Recombination protein RecR.